Here is a 481-residue protein sequence, read N- to C-terminus: 6-phosphogluconate dehydrogenase, decarboxylating (481 aa).

NADP(+) is bound by residues 11 to 16 (GLAVMG), 34 to 36 (NRT), 76 to 78 (VKA), and Asn104. Residues Asn104 and 130–132 (SGG) each bind substrate. Lys184 serves as the catalytic Proton acceptor. 187 to 188 (HN) is a substrate binding site. Catalysis depends on Glu191, which acts as the Proton donor. Substrate is bound by residues Tyr192, Lys259, Arg286, Arg445, and His451.

The protein belongs to the 6-phosphogluconate dehydrogenase family. In terms of assembly, homodimer.

It catalyses the reaction 6-phospho-D-gluconate + NADP(+) = D-ribulose 5-phosphate + CO2 + NADPH. The protein operates within carbohydrate degradation; pentose phosphate pathway; D-ribulose 5-phosphate from D-glucose 6-phosphate (oxidative stage): step 3/3. Functionally, catalyzes the oxidative decarboxylation of 6-phosphogluconate to ribulose 5-phosphate and CO(2), with concomitant reduction of NADP to NADPH. The protein is 6-phosphogluconate dehydrogenase, decarboxylating (Pgd) of Ceratitis capitata (Mediterranean fruit fly).